The following is a 129-amino-acid chain: MGPRGAPLLVVVLVLGLHALAEGEKPSPCRCSRMTPSNRKNCGFPGITSDQCFNLGCCFDSSVAGVPWCFHPLPNQASEQCVMEVSARENCGYPGISPEDCASRHCCFSNLIFEVPWCFFPQSVDDCHY.

Residues 1 to 23 form the signal peptide; it reads MGPRGAPLLVVVLVLGLHALAEG. P-type domains lie at 29–73 and 79–122; these read CRCS…FHPL and EQCV…FFPQ. 7 disulfides stabilise this stretch: Cys29/Cys127, Cys31/Cys58, Cys42/Cys57, Cys52/Cys69, Cys81/Cys107, Cys91/Cys106, and Cys101/Cys118.

As to expression, expressed in the digestive tract, where it was found predominantly in the stomach with highest expression in the antrum. It is secreted predominantly from antral mucous cells into the lumen of the gastrointestinal tract.

Its subcellular location is the secreted. Functionally, inhibits gastrointestinal motility and gastric acid secretion. Could function as a structural component of gastric mucus, possibly by stabilizing glycoproteins in the mucus gel through interactions with carbohydrate side chains. The chain is Trefoil factor 2 (Tff2) from Rattus norvegicus (Rat).